A 195-amino-acid chain; its full sequence is Molybdenum cofactor guanylyltransferase (195 aa).

GTP contacts are provided by residues 12 to 14, lysine 25, asparagine 53, aspartate 70, and aspartate 100; that span reads LAG. Aspartate 100 is a Mg(2+) binding site.

Belongs to the MobA family. Monomer. Mg(2+) serves as cofactor.

The protein resides in the cytoplasm. The enzyme catalyses Mo-molybdopterin + GTP + H(+) = Mo-molybdopterin guanine dinucleotide + diphosphate. Its function is as follows. Transfers a GMP moiety from GTP to Mo-molybdopterin (Mo-MPT) cofactor (Moco or molybdenum cofactor) to form Mo-molybdopterin guanine dinucleotide (Mo-MGD) cofactor. The chain is Molybdenum cofactor guanylyltransferase from Vibrio parahaemolyticus serotype O3:K6 (strain RIMD 2210633).